The sequence spans 231 residues: uncharacterized protein (231 aa).

10–34 provides a ligand contact to NADP(+); the sequence is IITGASSGIGAATAKALEKQGVKVV. Ser140 provides a ligand contact to substrate. The Proton acceptor role is filled by Tyr153.

This sequence belongs to the short-chain dehydrogenases/reductases (SDR) family.

This is an uncharacterized protein from Staphylococcus haemolyticus (strain JCSC1435).